The primary structure comprises 346 residues: Partitioning defective 6 homolog alpha (346 aa).

Positions 1–116 (MARPQRTPAR…SNSLQRRKKG (116 aa)) are interaction with PRKCI and PRKCZ. Positions 15–95 (IVEVKSKFDA…PPLRLLVQKR (81 aa)) constitute a PB1 domain. The tract at residues 126-253 (RTRPPLLISL…VTVKPANQRN (128 aa)) is interaction with PARD3 and CDC42. The Pseudo-CRIB domain occupies 133 to 150 (ISLPQDFRQVSSVIDVDL). The region spanning 157–250 (RVRLHKHGSD…NLIVTVKPAN (94 aa)) is the PDZ domain. The tract at residues 257–346 (RGASGRLTGP…IRGDGSGFSL (90 aa)) is disordered. A phosphoserine mark is found at Ser278 and Ser345.

The protein belongs to the PAR6 family. In terms of assembly, interacts with MAP2K5. Interacts with PARD3. Interacts with GTP-bound forms of CDC42, RHOQ/TC10 and RAC1. Interacts with the N-terminal part of PRKCI and PRKCZ. Part of a complex with PARD3, CDC42 or RAC1 and PRKCI or PRKCZ. Part of a complex with LLGL1 and PRKCI. Interacts with human T-cell leukemia virus type I TAX protein. Interacts with PALS1 and CRB3. Interacts with TGFBR1; involved in TGF-beta induced epithelial to mesenchymal transition. Interacts with ECT2 ('Thr-359' phosphorylated form) and PRKCI. Interacts with DCTN1 and PCM1. Phosphorylated by the TGF-beta receptor. In terms of processing, ubiquitinated by the SCF(FBXO31) complex, leading to its proteasomal degradation. In terms of tissue distribution, expressed in pancreas, skeletal muscle, brain and heart. Weakly expressed in kidney and placenta.

Its subcellular location is the cytoplasm. The protein resides in the cell membrane. The protein localises to the cell projection. It is found in the ruffle. It localises to the cell junction. Its subcellular location is the tight junction. The protein resides in the cytoskeleton. The protein localises to the microtubule organizing center. It is found in the centrosome. It localises to the centriolar satellite. In terms of biological role, adapter protein involved in asymmetrical cell division and cell polarization processes. Probably involved in the formation of epithelial tight junctions. Association with PARD3 may prevent the interaction of PARD3 with F11R/JAM1, thereby preventing tight junction assembly. The PARD6-PARD3 complex links GTP-bound Rho small GTPases to atypical protein kinase C proteins. Regulates centrosome organization and function. Essential for the centrosomal recruitment of key proteins that control centrosomal microtubule organization. In Homo sapiens (Human), this protein is Partitioning defective 6 homolog alpha (PARD6A).